Reading from the N-terminus, the 246-residue chain is Adenosine 5'-phosphosulfate reductase (246 aa).

[4Fe-4S] cluster is bound by residues cysteine 131, cysteine 132, cysteine 214, and cysteine 217. Residue cysteine 242 is the Nucleophile; cysteine thiosulfonate intermediate of the active site.

It belongs to the PAPS reductase family. CysH subfamily. [4Fe-4S] cluster is required as a cofactor.

Its subcellular location is the cytoplasm. It catalyses the reaction [thioredoxin]-disulfide + sulfite + AMP + 2 H(+) = adenosine 5'-phosphosulfate + [thioredoxin]-dithiol. It participates in sulfur metabolism; hydrogen sulfide biosynthesis; sulfite from sulfate. Functionally, catalyzes the formation of sulfite from adenosine 5'-phosphosulfate (APS) using thioredoxin as an electron donor. This is Adenosine 5'-phosphosulfate reductase from Neisseria meningitidis serogroup B (strain ATCC BAA-335 / MC58).